Here is a 329-residue protein sequence, read N- to C-terminus: 3'-5' exonuclease (329 aa).

The interval 26–88 (EEKPKPKKVV…MADVGTPSPE (63 aa)) is disordered. The segment covering 46 to 65 (KNLDTPEIVNKENAEVENPP) has biased composition (basic and acidic residues). 2 positions are modified to phosphoserine: Ser78 and Ser86. The 159-residue stretch at 130 to 288 (TEIVPMAFDM…IGQVIYREIE (159 aa)) folds into the 3'-5' exonuclease domain. Residues Asp138, Glu140, and Asp276 each coordinate Mg(2+).

The protein belongs to the WRNexo family.

It is found in the nucleus. Has exonuclease activity on both single-stranded and duplex templates bearing overhangs, but not blunt ended duplex DNA, and cleaves in a 3'-5' direction. Essential for the formation of DNA replication focal centers. Has an important role in maintaining genome stability. In Drosophila mojavensis (Fruit fly), this protein is 3'-5' exonuclease.